A 528-amino-acid chain; its full sequence is Phosphoenolpyruvate carboxykinase (ATP) (528 aa).

Residues arginine 56, tyrosine 192, and lysine 198 each coordinate substrate. Residues lysine 198, histidine 217, and 233-241 (GLSGTGKTT) contribute to the ATP site. 2 residues coordinate Mn(2+): lysine 198 and histidine 217. Position 254 (aspartate 254) interacts with Mn(2+). ATP is bound by residues glutamate 282, arginine 319, and threonine 444. Substrate is bound at residue arginine 319.

This sequence belongs to the phosphoenolpyruvate carboxykinase (ATP) family. Requires Mn(2+) as cofactor.

It localises to the cytoplasm. The enzyme catalyses oxaloacetate + ATP = phosphoenolpyruvate + ADP + CO2. It participates in carbohydrate biosynthesis; gluconeogenesis. Its function is as follows. Involved in the gluconeogenesis. Catalyzes the conversion of oxaloacetate (OAA) to phosphoenolpyruvate (PEP) through direct phosphoryl transfer between the nucleoside triphosphate and OAA. In Bacillus cereus (strain 03BB102), this protein is Phosphoenolpyruvate carboxykinase (ATP).